Reading from the N-terminus, the 2319-residue chain is Neurogenic locus notch homolog protein 3 (2319 aa).

Basic residues predominate over residues 1-14 (MGPGARGRRRRRRL). Residues 1 to 20 (MGPGARGRRRRRRLMALPPP) form a disordered region. Residues 1 to 40 (MGPGARGRRRRRRLMALPPPPPPMRALPLLLLLLAGLGAA) form the signal peptide. EGF-like domains lie at 41-79 (APPCLDGSPCANGGRCTHQQPSREAACLCLPGWVGERCQ), 80-120 (LEDP…PDCS), and 121-158 (LPDPCFSSPCAHGAPCSVGSDGRYACACPPGYQGRNCR). The Extracellular segment spans residues 41-1645 (APPCLDGSPC…LEPPEQSVPL (1605 aa)). 99 disulfide bridges follow: Cys44-Cys56, Cys50-Cys67, Cys69-Cys78, Cys84-Cys95, Cys89-Cys108, Cys110-Cys119, Cys125-Cys136, Cys130-Cys146, Cys148-Cys157, Cys164-Cys176, Cys170-Cys185, Cys187-Cys196, Cys203-Cys214, Cys208-Cys224, Cys226-Cys235, Cys242-Cys253, Cys247-Cys262, Cys264-Cys273, Cys280-Cys293, Cys287-Cys302, Cys304-Cys313, Cys320-Cys331, Cys325-Cys340, Cys342-Cys351, Cys357-Cys368, Cys362-Cys379, Cys381-Cys390, Cys397-Cys410, Cys404-Cys419, Cys421-Cys430, Cys437-Cys448, Cys442-Cys457, Cys459-Cys468, Cys475-Cys486, Cys480-Cys495, Cys497-Cys506, Cys513-Cys524, Cys518-Cys533, Cys535-Cys544, Cys551-Cys561, Cys556-Cys570, Cys572-Cys581, Cys588-Cys599, Cys593-Cys608, Cys610-Cys619, Cys626-Cys636, Cys631-Cys645, Cys647-Cys656, Cys663-Cys674, Cys668-Cys683, Cys685-Cys694, Cys701-Cys711, Cys706-Cys720, Cys722-Cys731, Cys740-Cys751, Cys745-Cys760, Cys762-Cys771, Cys777-Cys788, Cys782-Cys798, Cys800-Cys809, Cys816-Cys828, Cys822-Cys837, Cys839-Cys848, Cys855-Cys866, Cys860-Cys875, Cys877-Cys886, Cys893-Cys903, Cys898-Cys912, Cys914-Cys923, Cys930-Cys941, Cys935-Cys950, Cys952-Cys961, Cys968-Cys979, Cys973-Cys988, Cys990-Cys999, Cys1006-Cys1017, Cys1011-Cys1024, Cys1026-Cys1035, Cys1042-Cys1063, Cys1057-Cys1072, Cys1074-Cys1083, Cys1090-Cys1101, Cys1095-Cys1110, Cys1112-Cys1121, Cys1128-Cys1139, Cys1133-Cys1148, Cys1150-Cys1159, Cys1166-Cys1184, Cys1178-Cys1193, Cys1195-Cys1204, Cys1211-Cys1224, Cys1216-Cys1234, Cys1236-Cys1245, Cys1252-Cys1263, Cys1257-Cys1277, Cys1279-Cys1288, Cys1295-Cys1306, Cys1300-Cys1315, and Cys1317-Cys1326. Residues 160 to 197 (DIDECRAGASCRHGGTCINTPGSFHCLCPLGYTGLLCE) enclose the EGF-like 4; calcium-binding domain. Residues 199–236 (PIVPCAPSPCRNGGTCRQSSDVTYDCACLPGFEGQNCE) form the EGF-like 5 domain. The EGF-like 6; calcium-binding domain occupies 238–274 (NVDDCPGHRCLNGGTCVDGVNTYNCQCPPEWTGQFCT). One can recognise an EGF-like 7 domain in the interval 276–314 (DVDECQLQPNACHNGGTCFNLLGGHSCVCVNGWTGESCS). An EGF-like 8; calcium-binding domain is found at 316–352 (NIDDCATAVCFHGATCHDRVASFYCACPMGKTGLLCH). The EGF-like 9 domain occupies 353-391 (LDDACVSNPCHEDAICDTNPVSGRAICTCPPGFTGGACD). Positions 393 to 431 (DVDECSIGANPCEHLGRCVNTQGSFLCQCGRGYTGPRCE) constitute an EGF-like 10; calcium-binding domain. Residues 433–469 (DVNECLSGPCRNQATCLDRIGQFTCICMAGFTGTFCE) enclose the EGF-like 11; calcium-binding domain. Residues 471 to 507 (DIDECQSSPCVNGGVCKDRVNGFSCTCPSGFSGSTCQ) enclose the EGF-like 12; calcium-binding domain. Residues 509-545 (DVDECASTPCRNGAKCVDQPDGYECRCAEGFEGTLCE) enclose the EGF-like 13; calcium-binding domain. In terms of domain architecture, EGF-like 14; calcium-binding spans 547-582 (NVDDCSPDPCHHGRCVDGIASFSCACAPGYTGIRCE). Residues 584–620 (QVDECRSQPCRYGGKCLDLVDKYLCRCPPGTTGVNCE) enclose the EGF-like 15; calcium-binding domain. One can recognise an EGF-like 16; calcium-binding domain in the interval 622–657 (NIDDCASNPCTFGVCRDGINRYDCVCQPGFTGPLCN). Positions 659–695 (EINECASSPCGEGGSCVDGENGFHCLCPPGSLPPLCL) constitute an EGF-like 17; calcium-binding domain. 3 EGF-like domains span residues 697-732 (ANHPCAHKPCSHGVCHDAPGGFQCVCDPGWSGPRCS), 736-772 (APDACESQPCQAGGTCTSDGIGFHCTCAPGFQGHQCE), and 773-810 (VLSPCTPSLCEHGGHCESDPDQLTVCSCPPGWQGPRCQ). The 38-residue stretch at 812-849 (DVDECAGASPCGPHGTCTNLPGSFRCICHGGYTGPFCD) folds into the EGF-like 21; calcium-binding domain. The EGF-like 22; calcium-binding domain maps to 851–887 (DIDDCDPNPCLNGGSCQDGVGSFSCSCLSGFAGPRCA). Residues 889–924 (DVDECLSSPCGPGTCTDHVASFTCTCPPGYGGFHCE) enclose the EGF-like 23; calcium-binding domain. EGF-like domains follow at residues 926–962 (DLLDCSPSSCFNGGTCVDGVNSFSCLCRPGYTGTHCQ), 964–1000 (KVDPCFSRPCLHGGICNPTHSGFECTCREGFTGNQCQ), 1002–1036 (PVDWCSQAPCQNGGRCVQTGAYCICPPEWSGPLCD), 1038–1084 (PSLP…SHCE), and 1086–1122 (EVDPCTAQPCQHGGTCRGYMGGYVCECPTGYSGDSCE). One can recognise an EGF-like 29; calcium-binding domain in the interval 1124–1160 (DVDECASQPCQNGGSCIDLVAHYLCSCPPGTLGVLCE). Positions 1162–1205 (NEDDCGPGPSLDSGLRCLHNGTCVDLVGGFRCNCPPGYTGLHCE) constitute an EGF-like 30; calcium-binding domain. The N-linked (GlcNAc...) asparagine glycan is linked to Asn1181. 4 EGF-like domains span residues 1207 to 1246 (DINECRPGTCHAAHTRDCLQDPGGHFRCICLPGFTGPRCQ), 1248 to 1289 (ALFP…LRCE), 1291 to 1327 (VARSCRELQCPVGIPCQQTARGPRCACPPGLSGPSCR), and 1337 to 1375 (TNTSCAATPCLHGGSCLPVQSVPFFRCVCAPGWGGPRCE). A glycan (N-linked (GlcNAc...) asparagine) is linked at Asn1338. Disulfide bonds link Cys1341/Cys1352, Cys1346/Cys1363, Cys1365/Cys1374, Cys1389/Cys1412, Cys1394/Cys1407, Cys1403/Cys1419, Cys1430/Cys1453, Cys1435/Cys1448, Cys1444/Cys1460, Cys1469/Cys1495, Cys1477/Cys1490, and Cys1486/Cys1502. 3 LNR repeats span residues 1389–1429 (CPRA…PWRQ), 1430–1467 (CEALQCWRLFNNSRCDPACSSPACLYDNFDCYSGGRDR), and 1469–1507 (CNPVYKKYCADHFADGRCDQGCNTEECGWDGLDCASEVP). Asn1440 carries N-linked (GlcNAc...) asparagine glycosylation. The helical transmembrane segment at 1646-1666 (LPLLVAGAVFLLVIFVLGVMV) threads the bilayer. Residues 1667-2319 (ARRKREHSTL…EVTPKRQVMA (653 aa)) are Cytoplasmic-facing. ANK repeat units follow at residues 1840–1869 (TGETALHLAARYARADAAKRLLDAGADTNA), 1873–1903 (SGRTPLHTAVTADAQGVFQILIRNRSTDLDA), 1907–1936 (DGSTALILAARLAVEGMVEELIASHADVNA), 1940–1969 (LGKSALHWAAAVNNVEATLALLKNGANKDM), and 1973–2002 (KEETPLFLAAREGSYEAAKLLLDHFANREI). Disordered regions lie at residues 2026–2046 (LDQPSGPRSPSGPHGLGPLLC) and 2059–2129 (QSGT…EGPY). A compositionally biased stretch (low complexity) spans 2029–2046 (PSGPRSPSGPHGLGPLLC). Arg2175 bears the Omega-N-methylarginine mark. The tract at residues 2197–2319 (LNPATPVSPH…EVTPKRQVMA (123 aa)) is disordered. Low complexity predominate over residues 2263–2288 (SLSDWSDSTPSPATATSATAAGALPA). Residues 2297 to 2306 (SLPQSQTQLG) are compositionally biased toward polar residues.

This sequence belongs to the NOTCH family. In terms of assembly, heterodimer of a C-terminal fragment N(TM) and a N-terminal fragment N(EC) which are probably linked by disulfide bonds. Interacts with MAML1, MAML2 and MAML3 which act as transcriptional coactivators for NOTCH3. Interacts with PSMA1. Interacts with HIF1AN. Post-translationally, synthesized in the endoplasmic reticulum as an inactive form which is proteolytically cleaved by a furin-like convertase in the trans-Golgi network before it reaches the plasma membrane to yield an active, ligand-accessible form. Cleavage results in a C-terminal fragment N(TM) and a N-terminal fragment N(EC). Following ligand binding, it is cleaved by TNF-alpha converting enzyme (TACE) to yield a membrane-associated intermediate fragment called notch extracellular truncation (NEXT). This fragment is then cleaved by presenilin dependent gamma-secretase to release a notch-derived peptide containing the intracellular domain (NICD) from the membrane. Phosphorylated. In terms of processing, hydroxylated by HIF1AN. Expressed in postnatal central nervous system (CNS) germinal zones and, in early postnatal life, within numerous cells throughout the CNS. It is more highly localized to ventricular germinal zones.

Its subcellular location is the cell membrane. The protein resides in the nucleus. In terms of biological role, functions as a receptor for membrane-bound ligands Jagged1, Jagged2 and Delta1 to regulate cell-fate determination. Upon ligand activation through the released notch intracellular domain (NICD) it forms a transcriptional activator complex with RBPJ/RBPSUH and activates genes of the enhancer of split locus. Affects the implementation of differentiation, proliferation and apoptotic programs. Acts instructively to control the cell fate determination of CNS multipotent progenitor cells, resulting in astroglial induction and neuron/oligodendrocyte suppression. The sequence is that of Neurogenic locus notch homolog protein 3 (Notch3) from Rattus norvegicus (Rat).